Reading from the N-terminus, the 85-residue chain is Homeobox protein knotted-1-like 4 (85 aa).

The ELK domain maps to 1–21 (ELKYQLLKKYSGYLSSLRQEF). The homeobox; TALE-type DNA-binding region spans 22 to 85 (SKKKKKGKLP…NQRKRHWKPS (64 aa)).

Belongs to the TALE/KNOX homeobox family. Strongly expressed in ear inflorescence primordia and shoot meristem. Weakly expressed in embryos. Absent from leaves.

It is found in the nucleus. In terms of biological role, probably binds to the DNA sequence 5'-TGAC-3'. The protein is Homeobox protein knotted-1-like 4 (KNOX4) of Zea mays (Maize).